The chain runs to 159 residues: UPF0336 protein MAP_4107 (159 aa).

The protein belongs to the UPF0336 family.

The sequence is that of UPF0336 protein MAP_4107 from Mycolicibacterium paratuberculosis (strain ATCC BAA-968 / K-10) (Mycobacterium paratuberculosis).